The following is a 172-amino-acid chain: uncharacterized protein (172 aa).

A compositionally biased stretch (low complexity) spans 1–28 (MAAAGVTAKAGGGTSAAAASLIRARSPA). Residues 1 to 172 (MAAAGVTAKA…GGRRSGRDAG (172 aa)) form a disordered region. Residues 58 to 68 (PRRRSRARRGH) show a composition bias toward basic residues. A compositionally biased stretch (gly residues) spans 80-100 (TVGGEGQASQIGGGGGGGGGR). Over residues 129–138 (PGLASSPGVA) the composition is skewed to low complexity. The span at 139–165 (PAGGSGGLWSGAGLCSGLGARGFPGGR) shows a compositional bias: gly residues.

This is an uncharacterized protein from Homo sapiens (Human).